Consider the following 250-residue polypeptide: uncharacterized protein (250 aa).

The transit peptide at 1 to 52 (MALAWCVVRRSASKFASVYGGRVRSISAVANRASLARNPSSIRPFVSRALNY) directs the protein to the mitochondrion. Residues 124 to 147 (PSLVSDENDDDDDDDEGPSNESSI) are disordered. Positions 129–141 (DENDDDDDDDEGP) are enriched in acidic residues.

Belongs to the MAM33 family.

Its subcellular location is the mitochondrion matrix. This is an uncharacterized protein from Arabidopsis thaliana (Mouse-ear cress).